The chain runs to 177 residues: O-acetyl-ADP-ribose deacetylase (177 aa).

Residues 1–175 form the Macro domain; it reads MKSRIHVQHG…LYERLLTQQG (175 aa). Residues 11–12, Asn-25, 33–35, and 122–126 each bind substrate; these read DI, GVD, and STGAY. Asp-35 acts as the Proton acceptor in catalysis.

It belongs to the MacroD-type family. YmdB subfamily. In terms of assembly, homodimer. Interacts with RNase III.

It catalyses the reaction 3''-O-acetyl-ADP-D-ribose + H2O = ADP-D-ribose + acetate + H(+). It carries out the reaction 2''-O-acetyl-ADP-D-ribose + H2O = ADP-D-ribose + acetate + H(+). Deacetylates O-acetyl-ADP ribose to yield ADP-ribose and free acetate. Down-regulates ribonuclease 3 (RNase III) activity. Acts by interacting directly with the region of the ribonuclease that is required for dimerization/activation. This is O-acetyl-ADP-ribose deacetylase from Citrobacter koseri (strain ATCC BAA-895 / CDC 4225-83 / SGSC4696).